A 4911-amino-acid chain; its full sequence is Histone-lysine N-methyltransferase 2C (4911 aa).

Residues 1–101 form a disordered region; that stretch reads MSSEEDKSVE…EDAEAEVDNS (101 aa). Positions 12–28 are enriched in pro residues; that stretch reads PQPPPPPPEEPGAPAPS. Phosphoserine occurs at positions 28 and 46. The segment at residues 34–46 is a DNA-binding region (a.T hook); sequence KRPRGRPRKDGAS. The segment covering 50-59 has biased composition (basic residues); sequence RARKKPRSRG. The segment covering 64–81 has biased composition (acidic residues); that stretch reads EDEDSMDGLETTETETIV. Ser-89 bears the Phosphoserine mark. A coiled-coil region spans residues 92–112; the sequence is EDAEAEVDNSKQLIPTLQRSV. Phosphoserine is present on Ser-113. Residues 164-203 form a disordered region; sequence RNQPSNKKDIDDNSNGTYEKMQNSAPRKQRGQRKERSPQQ. Polar residues predominate over residues 176 to 189; that stretch reads NSNGTYEKMQNSAP. Phosphoserine is present on Ser-200. The C2HC pre-PHD-type 1; degenerate zinc finger occupies 227 to 262; it reads ELSLVGLPDAIDIQALFDSTGTCWAHHRCVEWSLGV. 4 consecutive PHD-type zinc fingers follow at residues 283–331, 341–391, 388–438, and 464–520; these read ERCA…PEHI, DANC…CKVC, CKVC…CRIC, and DNLC…CKHL. Residues 344–389 form an RING-type zinc finger; that stretch reads CAVCDSPGDLLDQFFCTTCGQHYHGMCLDIAVTPLKRAGWQCPECK. The DHHC domain occupies 436-489; it reads RICIECGTRSSSQWHHNCLICDNCYQQQDNLCPFCGKCYHPELQKDMLHCNMCK. Positions 644 to 672 form a coiled coil; it reads EDKMEVTENIEVVTHQITVQQEQLQLLEE. Residues 721–730 are compositionally biased toward basic and acidic residues; the sequence is QGEKEQKENS. The tract at residues 721-742 is disordered; sequence QGEKEQKENSELSTGLMDSEMT. The residue at position 758 (Lys-758) is an N6-acetyllysine. The span at 763–791 shows a compositional bias: low complexity; it reads SSETESSFSSSADISKADVSSSPTPSSDL. Disordered stretches follow at residues 763-798, 828-864, and 885-912; these read SSETESSFSSSADISKADVSSSPTPSSDLPSHDMLH, PAITKRKFSPGRPRSKQGAWSTHNTVSPPSWSPDISE, and GRGSGFPGKRRPRGAGLSGRGGRGRSKL. Over residues 830 to 842 the composition is skewed to basic residues; it reads ITKRKFSPGRPRS. Polar residues predominate over residues 845–856; it reads GAWSTHNTVSPP. The residue at position 854 (Ser-854) is a Phosphoserine. 3 PHD-type zinc fingers span residues 957–1010, 1007–1057, and 1084–1139; these read QDMC…CTVC, CTVC…CVWC, and LSSC…CRPY. Residues 1215–1324 are disordered; the sequence is AVLQTPPDIQ…LPCRDDGWSE (110 aa). Basic and acidic residues predominate over residues 1224 to 1270; it reads QSEHSRDGEMDDSREGELMDCDGKSESSPEREAVDDETKGVEGTDGV. A Phosphoserine modification is found at Ser-1301. Residues 1338–1366 are a coiled coil; that stretch reads TESTEKIKKRYRKRKNKLEETFPAYLQEA. Positions 1406–1416 are enriched in low complexity; it reads PSLDPLLSSSS. Disordered stretches follow at residues 1406 to 1431 and 1458 to 1485; these read PSLDPLLSSSSAPTKSGTHGPADDPL and HSDIGPVTDDPSSLPQPNVNQSSRPLSE. Residues 1467–1482 are compositionally biased toward polar residues; that stretch reads DPSSLPQPNVNQSSRP. Lys-1508 bears the N6-acetyllysine mark. Disordered stretches follow at residues 1604–1630 and 1709–2448; these read FNPMASDPNNSWTSSAPTVEGENDTMS and VQMS…SPVA. 2 stretches are compositionally biased toward polar residues: residues 1610–1620 and 1709–1727; these read DPNNSWTSSAP and VQMSNDSMKRQQQQDSIDP. Positions 1729-1753 are enriched in basic and acidic residues; it reads SRIDSELFKDPLKQRESEHEQEWKF. Residues 1754-1787 adopt a coiled-coil conformation; the sequence is RQQMRQKSKQQAKIEATQKLEQVKNEQQQQQQQQ. Lys-1772 is modified (N6-acetyllysine). Positions 1788-1823 are enriched in polar residues; the sequence is FGSQHLLVQSGSDTPSSGIQSPLTPQPGNGNMSPAQ. The span at 1851-1860 shows a compositional bias: pro residues; it reads QAPPPPPAPS. The segment covering 1861 to 1875 has biased composition (low complexity); the sequence is RIPIQDSLSQAQTSQ. The span at 1927-1945 shows a compositional bias: polar residues; the sequence is TPLSSVSRPLQMNETTANR. Residue Ser-1987 is modified to Phosphoserine. The residue at position 2009 (Lys-2009) is an N6-acetyllysine. 4 stretches are compositionally biased toward polar residues: residues 2054 to 2065, 2085 to 2094, 2115 to 2131, and 2144 to 2159; these read QDPYGSVSQASR, FSHNQSNDPY, AFSQPGTISRPTSQDPY, and SYSQSSGTARSNTDPY. Over residues 2173–2187 the composition is skewed to low complexity; it reads PYSQQPQTPRPSTQT. Composition is skewed to polar residues over residues 2302 to 2319, 2335 to 2353, and 2362 to 2375; these read SPMTPRSQSDSFGTSQTA, CASSNSPMHSQGQQFSGVS, and SGVTDTQNTVNMAQ. Positions 2377 to 2389 are enriched in basic and acidic residues; the sequence is DTEKLRQRQKLRE. Low complexity predominate over residues 2390–2399; that stretch reads IILQQQQQKK. Asymmetric dimethylarginine is present on residues Arg-2454 and Arg-2571. 4 disordered regions span residues 2589 to 2694, 2793 to 2887, 2925 to 2954, and 2989 to 3029; these read RHGN…SDDP, EPKK…RETA, EKSDNSDIRPSGSPPPPTLPASPSNHVSSL, and VNPG…SGPQ. 2 stretches are compositionally biased toward polar residues: residues 2629-2645 and 2661-2682; these read PPSQQEQGHSVHSSSMV and PLSTSVPSETTSDNLQITTQPS. Residues 2793–2811 show a composition bias toward basic and acidic residues; the sequence is EPKKKEQENKTLVLSDKHS. Residues Lys-2802 and Lys-2809 each carry the N6-acetyllysine modification. Positions 2814–2832 are enriched in polar residues; that stretch reads KKSTVTNEVKTEVLSPNSK. The residue at position 2828 (Ser-2828) is a Phosphoserine. Lys-2832 is subject to N6-acetyllysine. Positions 2833–2849 are enriched in basic and acidic residues; sequence VESKCETEKNDENKDNV. Residues 2851-2860 are compositionally biased toward polar residues; it reads TPCSQASAHS. A compositionally biased stretch (basic and acidic residues) spans 2861–2884; the sequence is DLNDGEKTSLHPCDPDLFEKRTNR. N6-acetyllysine is present on Lys-2867. Residues 3011–3029 show a composition bias toward low complexity; the sequence is TQTGPQTSQSGTSSMSGPQ. 3 coiled-coil regions span residues 3054–3081, 3173–3272, and 3391–3433; these read LLQDLLDQERQEQQQQRQMQAMIRQRSE, NDSQ…QQQQ, and FSES…EMEQ. The span at 3205–3221 shows a compositional bias: basic residues; the sequence is HRKSKKALSAKQRTAKK. Disordered stretches follow at residues 3205 to 3241, 3353 to 3409, 3527 to 3583, 3596 to 3919, and 4024 to 4053; these read HRKSKKALSAKQRTAKKAGREFPEEDAEQLKHVTEQQ, PPIA…EQQE, PNFS…HSYP, IIPE…MANG, and VKEEPPEPVPSPIIPILPSTAGKSSESRRN. Basic and acidic residues-rich tracts occupy residues 3222-3238 and 3395-3409; these read AGREFPEEDAEQLKHVT and FQERERKERLREQQE. 4 stretches are compositionally biased toward polar residues: residues 3527 to 3549, 3564 to 3583, 3637 to 3658, and 3684 to 3701; these read PNFSSVKQGHGNLSGTSFQQSPV, ANSSLPCGQDSTITHGHSYP, ISETTSTPAVSTPSELPQQADQ, and LPNSDFSQATPNQQTYAN. The span at 3703–3725 shows a compositional bias: basic and acidic residues; that stretch reads EVDKLSMETPAKTEEIKLEKAET. Position 3714 is an N6-acetyllysine (Lys-3714). Position 3758 is a phosphoserine (Ser-3758). Positions 3803–3812 are enriched in basic and acidic residues; that stretch reads DCTKDNKLVE. Positions 3878–3892 are enriched in polar residues; the sequence is MYSSTDTFTHLKQQN. A compositionally biased stretch (pro residues) spans 3897 to 3911; it reads PPTPPASLPPTPPPM. Ser-4034 carries the post-translational modification Phosphoserine. Arg-4139 is subject to Asymmetric dimethylarginine. Ser-4267 carries the post-translational modification Phosphoserine. The C2HC pre-PHD-type 2 zinc-finger motif lies at 4399-4439; it reads YRKCCFCHEEGDGLTDGPARLLNLDLDLWVHLNCALWSTEV. The PHD-type 8 zinc finger occupies 4460-4507; sequence MKCVFCHKTGATSGCHRFRCTNIYHFTCAIKAQCMFFKDKTMLCPMHK. An FYR N-terminal domain is found at 4545 to 4605; the sequence is DHTFRVGSLI…CRYLCSIEEK (61 aa). The 86-residue stretch at 4606–4691 folds into the FYR C-terminal domain; sequence DGRPVFVIRI…EACENYTFRY (86 aa). Residues 4707-4712 carry the WDR5 interaction motif (WIN) motif; sequence GCARSE. The SET domain occupies 4771-4887; the sequence is SNVYLARSRI…KGEELCYDYK (117 aa). Residues Tyr-4825 and 4848–4849 each bind S-adenosyl-L-methionine; that span reads NH. Zn(2+) is bound by residues Cys-4851, Cys-4899, Cys-4901, and Cys-4906. Residues 4895–4911 enclose the Post-SET domain; sequence HKIPCHCGAVNCRKWMN.

Belongs to the class V-like SAM-binding methyltransferase superfamily. Histone-lysine methyltransferase family. TRX/MLL subfamily. Component of the MLL3 complex (also named ASCOM complex), at least composed of catalytic subunit KMT2C/MLL3, ASH2L, RBBP5, WDR5, NCOA6, DPY30, KDM6A, PAXIP1/PTIP, PAGR1 and alpha- and beta-tubulin. Forms a core complex with the evolutionary conserved subcomplex WRAD composed of WDR5, RBBP5, ASH2L/ASH2 and DPY30 subunits; WRAD differentially stimulates the methyltransferase activity. Interacts (via WIN motif) with WDR5. As to expression, highly expressed in testis and ovary, followed by brain and liver. Also expressed in placenta, peripherical blood, fetal thymus, heart, lung and kidney. Within brain, expression was highest in hippocampus, caudate nucleus, and substantia nigra. Not detected in skeletal muscle and fetal liver.

It is found in the nucleus. It carries out the reaction L-lysyl(4)-[histone H3] + S-adenosyl-L-methionine = N(6)-methyl-L-lysyl(4)-[histone H3] + S-adenosyl-L-homocysteine + H(+). Functionally, histone methyltransferase that catalyzes methyl group transfer from S-adenosyl-L-methionine to the epsilon-amino group of 'Lys-4' of histone H3 (H3K4). Part of chromatin remodeling machinery predominantly forms H3K4me1 methylation marks at active chromatin sites where transcription and DNA repair take place. Likely plays a redundant role with KMT2D in enriching H3K4me1 mark on primed and active enhancer elements. The sequence is that of Histone-lysine N-methyltransferase 2C (KMT2C) from Homo sapiens (Human).